A 307-amino-acid chain; its full sequence is Lactamase-like protein vrtG (307 aa).

His97, His99, Asp101, and His102 together coordinate Zn(2+). Catalysis depends on Asp101, which acts as the Proton donor/acceptor.

This sequence belongs to the metallo-beta-lactamase superfamily. Zn(2+) serves as cofactor.

It participates in secondary metabolite biosynthesis; terpenoid biosynthesis. Lactamase-like protein; part of the gene cluster that mediates the biosynthesis of viridicatumtoxin, a tetracycline-like fungal meroterpenoid with a unique, fused spirobicyclic ring system. The first step of the pathway is the production of the malonamoyl-CoA starter unit for the polyketide synthase vrtA. The aldolase vrtJ may be involved in the synthesis of the malonamate substrate for malonamoyl-CoA synthetase vrtB. The polyketide synthase vrtA then may utilize the malonamoyl-CoA starter unit, followed by sequential condensation of eight malonyl-CoA units to form the polyketide backbone. The cyclization of the last ring could be mediated by the lactamase-like protein vrtG. The proposed post-PKS tailoring steps are a hydroxylation at C5 catalyzed the cytochrome P450 monooxygenase vrtE, a hydroxylation at C12a catalyzed by VrtH and/or VrtI, and an O-methylation by the O-methyltransferase vrtF. VrtC is then proposed to catalyze the transfer of a geranyl group synthesized by vrtD to the aromatic C ring of the tetracyclic polyketide intermediate of viridicatumtoxin to yield previridicatumtoxin. Finally, the cytochrome P450 monooxygenase vrtK catalyzes the spirocyclization of the geranyl moiety of previridicatumtoxin to afford viridicatumtoxin. The polypeptide is Lactamase-like protein vrtG (Penicillium aethiopicum).